A 180-amino-acid polypeptide reads, in one-letter code: Inosine/xanthosine triphosphatase (180 aa).

Position 8–13 (8–13 (TTNPAK)) interacts with substrate. Aspartate 38 provides a ligand contact to Mg(2+).

The protein belongs to the YjjX NTPase family. Homodimer. Requires Mg(2+) as cofactor. Mn(2+) is required as a cofactor.

It catalyses the reaction XTP + H2O = XDP + phosphate + H(+). The catalysed reaction is ITP + H2O = IDP + phosphate + H(+). Its function is as follows. Phosphatase that hydrolyzes non-canonical purine nucleotides such as XTP and ITP to their respective diphosphate derivatives. Probably excludes non-canonical purines from DNA/RNA precursor pool, thus preventing their incorporation into DNA/RNA and avoiding chromosomal lesions. This is Inosine/xanthosine triphosphatase from Yersinia pseudotuberculosis serotype O:1b (strain IP 31758).